Consider the following 265-residue polypeptide: MADS-box protein JOINTLESS (265 aa).

The 55-residue stretch at 3 to 57 (REKIQIKKIDNSTARQVTFSKRRRGLFKKAEELSVLCDADVALIIFSSTGKLFDY) folds into the MADS-box domain. The K-box domain maps to 87–177 (QLVENSNYSR…RQQVMEISNN (91 aa)). The disordered stretch occupies residues 196–232 (ENGFNNNNNEDGQSSESVTNPCNSIDPPPQDDDSSDT). The segment covering 205 to 218 (EDGQSSESVTNPCN) has biased composition (polar residues).

As to expression, widely expressed with highest levels in shoot tips and axillary buds. Also found in fully developed pedicels and flowers.

It is found in the nucleus. Its function is as follows. Putative transcription factor that coordinates gene expression underlying the differentiation of the pedicel abscission zone. May also be involved in the maintenance of the inflorescence meristem state. The chain is MADS-box protein JOINTLESS (J) from Solanum lycopersicum (Tomato).